Here is a 192-residue protein sequence, read N- to C-terminus: Small ribosomal subunit protein uS4c-2 (192 aa).

Positions T91 to Y155 constitute an S4 RNA-binding domain.

Belongs to the universal ribosomal protein uS4 family. As to quaternary structure, part of the 30S ribosomal subunit. Contacts protein S5. The interaction surface between S4 and S5 is involved in control of translational fidelity.

The protein localises to the plastid. It is found in the chloroplast. In terms of biological role, one of the primary rRNA binding proteins, it binds directly to 16S rRNA where it nucleates assembly of the body of the 30S subunit. Functionally, with S5 and S12 plays an important role in translational accuracy. The protein is Small ribosomal subunit protein uS4c-2 of Cyanidium caldarium (Red alga).